The primary structure comprises 368 residues: Glycoprotein UL18 (368 aa).

Positions 1–18 (MMTMWCLTLFVLWMLRVV) are cleaved as a signal peptide. An alpha-1-like region spans residues 19–114 (GMHVLRYGYT…EIALGYRSQS (96 aa)). 13 N-linked (GlcNAc...) asparagine; by host glycosylation sites follow: Asn-56, Asn-66, Asn-74, Asn-95, Asn-123, Asn-127, Asn-150, Asn-167, Asn-177, Asn-193, Asn-240, Asn-282, and Asn-291. The interval 115 to 208 (VLTWTHECNT…VIYSGFQPPV (94 aa)) is alpha-2-like. The tract at residues 209–303 (THPVVKGGVR…VEIPISVTSP (95 aa)) is alpha-3-like. The chain crosses the membrane as a helical span at residues 321 to 342 (YNTMTISSVLLALLLCALLFAF).

In terms of assembly, interacts with host LILRB1.

It localises to the host membrane. In terms of biological role, plays a role in the protection against host NK cell cytotoxicity by interacting with and modulating the activity of the host inhibitory leukocyte Ig-like receptor 1/LILRB1, which is expressed on monocytes, dendritic cells, as well as subsets of T and NK cells. UL18 exerts an inhibitory effect on LIR-1+ NK cells, while it stimulates LIR-1- NK cell. These modulations prevent lysis of the infected cells by NK cells. This Homo sapiens (Human) protein is Glycoprotein UL18 (H301).